The following is a 980-amino-acid chain: Ankycorbin (980 aa).

An N-acetylmethionine modification is found at Met1. Ser11 is subject to Phosphoserine. ANK repeat units lie at residues 18–51 (KNDD…KHDS), 52–81 (EGKT…DVTA), 85–114 (TGHS…PAES), 118–147 (SGKT…PINL), 151–180 (DGNI…DVNS), 184–213 (SGRT…DLNL), and 217–247 (LGYN…DADL). Residues 247–259 (LKTPTKPKQHDQV) show a composition bias toward basic and acidic residues. Residues 247–301 (LKTPTKPKQHDQVSKISSERSGTPKKRKAPPPPISPTQLSDVSSPRSITSTPLSG) are disordered. Phosphothreonine is present on Thr249. The Nuclear localization signal motif lies at 270–276 (PKKRKAP). A phosphoserine mark is found at Ser281, Ser286, and Ser293. Over residues 282-299 (PTQLSDVSSPRSITSTPL) the composition is skewed to polar residues. A phosphothreonine mark is found at Thr295 and Thr297. Phosphoserine is present on residues Ser300, Ser304, Ser318, Ser327, Ser329, Ser340, Ser341, Ser350, Ser358, Ser419, Ser512, Ser515, Ser667, and Ser915. Residues 349-374 (LSLLQAKVASLTLHNKELQDKLQAKS) are a coiled coil. The segment at 387-423 (YHSTQTDLGPSLGKPGETSPPDSKSSPSVLIHSLGKS) is disordered. Residues 425–947 (TDNDVRIQQL…QHQEVISVYR (523 aa)) adopt a coiled-coil conformation.

Interacts with PALLD. Associates with actin. However, does not bind F-actin directly. In terms of tissue distribution, highly expressed in placenta, muscle, kidney and testis. Moderately expressed in heart, brain, lung, liver and intestine. Isoform 2 is widely expressed and expressed in fetal and adult testes, and spermatozoa.

It is found in the cytoplasm. The protein localises to the cytoskeleton. Its subcellular location is the stress fiber. It localises to the cell cortex. The protein resides in the cell junction. It is found in the nucleus. In terms of biological role, plays a role in actin regulation at the ectoplasmic specialization, a type of cell junction specific to testis. Important for establishment of sperm polarity and normal spermatid adhesion. May also promote integrity of Sertoli cell tight junctions at the blood-testis barrier. The protein is Ankycorbin (RAI14) of Homo sapiens (Human).